Consider the following 182-residue polypeptide: Interferon gamma 1 (182 aa).

Residues 1–21 (MIAQNMTIFFWGVCLLTSGWA) form the signal peptide. The N-linked (GlcNAc...) asparagine glycan is linked to N93.

It belongs to the type II (or gamma) interferon family. As to quaternary structure, homodimer. As to expression, highly expressed in spleen. Also detected at lower levels in brain, gill, kidney, heart, intestine and muscle. In immune cell populations, has highest expression in peripheral blood leukocytes and splenocytes. Detected in kidney-derived monocytes, neutrophils, macrophages and leukocytes.

Its subcellular location is the secreted. In terms of biological role, cytokine which binds to interferon gamma receptor 1-like (ifngr1l). Has activating effects on primary macrophages and neutrophils. Induces nitric oxide production and phagocytic responses in macrophages. Primes macrophages and neutrophils for production of reactive oxygen intermediates (ROI). Stimulates phosphorylation and nuclear localization of the JAK/STAT signal transducer stat1. Promotes increased expression of a number of genes important for macrophage activity, including the interferon regulatory factors irf1, irf2, irf8 and irf9. This is Interferon gamma 1 from Carassius auratus (Goldfish).